Reading from the N-terminus, the 786-residue chain is Endonuclease MutS2 (786 aa).

333–340 is a binding site for ATP; sequence GPNTGGKT. The Smr domain maps to 711-786; the sequence is LDLRGERYDQ…GSGATIVNFK (76 aa).

Belongs to the DNA mismatch repair MutS family. MutS2 subfamily. Homodimer. Binds to stalled ribosomes, contacting rRNA.

In terms of biological role, endonuclease that is involved in the suppression of homologous recombination and thus may have a key role in the control of bacterial genetic diversity. Functionally, acts as a ribosome collision sensor, splitting the ribosome into its 2 subunits. Detects stalled/collided 70S ribosomes which it binds and splits by an ATP-hydrolysis driven conformational change. Acts upstream of the ribosome quality control system (RQC), a ribosome-associated complex that mediates the extraction of incompletely synthesized nascent chains from stalled ribosomes and their subsequent degradation. Probably generates substrates for RQC. The chain is Endonuclease MutS2 from Lacticaseibacillus paracasei (strain ATCC 334 / BCRC 17002 / CCUG 31169 / CIP 107868 / KCTC 3260 / NRRL B-441) (Lactobacillus paracasei).